The primary structure comprises 146 residues: Hemoglobin subunit beta (146 aa).

V1 bears the N-acetylvaline mark. The Globin domain maps to 2 to 146 (HLTGEEKSAV…VANALAHKYH (145 aa)). Position 12 is a phosphothreonine (T12). Residue S44 is modified to Phosphoserine. Residue K59 is modified to N6-acetyllysine. H63 lines the heme b pocket. K82 is modified (N6-acetyllysine). H92 contributes to the heme b binding site. Residue C93 is modified to S-nitrosocysteine. The residue at position 144 (K144) is an N6-acetyllysine.

Belongs to the globin family. Heterotetramer of two alpha chains and two beta chains. Red blood cells.

Involved in oxygen transport from the lung to the various peripheral tissues. This is Hemoglobin subunit beta (HBB) from Saguinus oedipus (Cotton-top tamarin).